A 135-amino-acid chain; its full sequence is Protein Wnt-7b (135 aa).

Cystine bridges form between Cys-3/Cys-17 and Cys-5/Cys-12. Ser-9 carries the O-palmitoleoyl serine; by PORCN lipid modification. The segment at 41–69 (VEVVRANRLRQPTFLKIKKVRSYQKPMET) is disordered linker. 3 disulfides stabilise this stretch: Cys-81–Cys-112, Cys-97–Cys-107, and Cys-134–Cys-135. A glycan (N-linked (GlcNAc...) asparagine) is linked at Asn-98.

This sequence belongs to the Wnt family. Post-translationally, palmitoleoylation is required for efficient binding to frizzled receptors. Depalmitoleoylation leads to Wnt signaling pathway inhibition. In terms of tissue distribution, in adults, in brain and lung.

Its subcellular location is the secreted. The protein resides in the extracellular space. The protein localises to the extracellular matrix. Its function is as follows. Ligand for members of the frizzled family of seven transmembrane receptors that functions in the canonical Wnt/beta-catenin signaling pathway. Required for normal fusion of the chorion and the allantois during placenta development. Required for central nervous system (CNS) angiogenesis and blood-brain barrier regulation. The protein is Protein Wnt-7b (wnt7b) of Xenopus laevis (African clawed frog).